The chain runs to 384 residues: S-adenosylmethionine synthase (384 aa).

H15 contacts ATP. D17 lines the Mg(2+) pocket. Residue E43 coordinates K(+). L-methionine contacts are provided by E56 and Q99. Positions 99-109 are flexible loop; it reads QSPDINQGVDK. ATP contacts are provided by residues 164 to 166, 230 to 231, D239, 245 to 246, A262, and K266; these read DAK, RF, and RK. Residue D239 coordinates L-methionine. Residue K270 coordinates L-methionine.

It belongs to the AdoMet synthase family. Homotetramer; dimer of dimers. The cofactor is Mg(2+). It depends on K(+) as a cofactor.

Its subcellular location is the cytoplasm. It catalyses the reaction L-methionine + ATP + H2O = S-adenosyl-L-methionine + phosphate + diphosphate. The protein operates within amino-acid biosynthesis; S-adenosyl-L-methionine biosynthesis; S-adenosyl-L-methionine from L-methionine: step 1/1. Its function is as follows. Catalyzes the formation of S-adenosylmethionine (AdoMet) from methionine and ATP. The overall synthetic reaction is composed of two sequential steps, AdoMet formation and the subsequent tripolyphosphate hydrolysis which occurs prior to release of AdoMet from the enzyme. The polypeptide is S-adenosylmethionine synthase (Vibrio vulnificus (strain YJ016)).